The chain runs to 919 residues: Transcriptional regulatory protein EDS1 (919 aa).

The segment at 1–54 (MSHHVPNLYGTPIRDPHERKRNSASMGEVNQSVSSRNCERGSEKGTKQRKKASR) is disordered. Residues 23 to 36 (SASMGEVNQSVSSR) show a composition bias toward polar residues. Residues 37 to 46 (NCERGSEKGT) are compositionally biased toward basic and acidic residues. Residues 56–85 (CDQCRRKRIKCRFDKHTGVCQGCLEVGEKC) constitute a DNA-binding region (zn(2)-C6 fungal-type). A disordered region spans residues 297-338 (AGCPNKKLGTDGRSDKWDKNSTWKPVYRSSNPSHPSTEKNVS). The span at 304 to 317 (LGTDGRSDKWDKNS) shows a compositional bias: basic and acidic residues. A compositionally biased stretch (polar residues) spans 318–338 (TWKPVYRSSNPSHPSTEKNVS).

Binds DNA in a sequence-specific manner.

The protein localises to the nucleus. This chain is Transcriptional regulatory protein EDS1 (EDS1), found in Saccharomyces cerevisiae (strain RM11-1a) (Baker's yeast).